The sequence spans 166 residues: uncharacterized protein (166 aa).

Low complexity predominate over residues 73-88 (SKLNNNNNSNNNNKMA). 2 disordered regions span residues 73–101 (SKLN…EKDK) and 126–166 (PQSS…EFNN). A compositionally biased stretch (basic and acidic residues) spans 89 to 101 (VDNKDNKDNEKDK). A compositionally biased stretch (low complexity) spans 134–154 (SPTHKSPSSSPKTISPVKVSP). The span at 155–166 (TSSPIKNPEFNN) shows a compositional bias: polar residues.

This is an uncharacterized protein from Dictyostelium discoideum (Social amoeba).